Here is a 359-residue protein sequence, read N- to C-terminus: Protein RecA (359 aa).

Residue 69–76 coordinates ATP; that stretch reads GPESSGKT. A disordered region spans residues 337–359; it reads SANSVAKASEEDEEEEVDLEPEE. Positions 346-359 are enriched in acidic residues; it reads EEDEEEEVDLEPEE.

The protein belongs to the RecA family.

Its subcellular location is the cytoplasm. In terms of biological role, can catalyze the hydrolysis of ATP in the presence of single-stranded DNA, the ATP-dependent uptake of single-stranded DNA by duplex DNA, and the ATP-dependent hybridization of homologous single-stranded DNAs. It interacts with LexA causing its activation and leading to its autocatalytic cleavage. This Nostoc punctiforme (strain ATCC 29133 / PCC 73102) protein is Protein RecA.